The following is a 486-amino-acid chain: Ribulose bisphosphate carboxylase large chain (486 aa).

2 residues coordinate substrate: asparagine 125 and threonine 175. Residue lysine 177 is the Proton acceptor of the active site. Lysine 179 contributes to the substrate binding site. The Mg(2+) site is built by lysine 203, aspartate 205, and glutamate 206. At lysine 203 the chain carries N6-carboxylysine. Histidine 295 acts as the Proton acceptor in catalysis. 3 residues coordinate substrate: arginine 296, histidine 328, and serine 380.

It belongs to the RuBisCO large chain family. Type I subfamily. In terms of assembly, heterohexadecamer of 8 large chains and 8 small chains. Mg(2+) is required as a cofactor.

It catalyses the reaction 2 (2R)-3-phosphoglycerate + 2 H(+) = D-ribulose 1,5-bisphosphate + CO2 + H2O. The catalysed reaction is D-ribulose 1,5-bisphosphate + O2 = 2-phosphoglycolate + (2R)-3-phosphoglycerate + 2 H(+). Its function is as follows. RuBisCO catalyzes two reactions: the carboxylation of D-ribulose 1,5-bisphosphate, the primary event in carbon dioxide fixation, as well as the oxidative fragmentation of the pentose substrate. Both reactions occur simultaneously and in competition at the same active site. In Cereibacter sphaeroides (Rhodobacter sphaeroides), this protein is Ribulose bisphosphate carboxylase large chain.